Here is a 247-residue protein sequence, read N- to C-terminus: Proteasome subunit alpha type-7-B (247 aa).

It belongs to the peptidase T1A family. The 26S proteasome consists of a 20S proteasome core and two 19S regulatory subunits. The 20S proteasome core is composed of 28 subunits that are arranged in four stacked rings, resulting in a barrel-shaped structure. The two end rings are each formed by seven alpha subunits, and the two central rings are each formed by seven beta subunits. The catalytic chamber with the active sites is on the inside of the barrel. Phosphorylated in G2 phase.

It localises to the cytoplasm. The protein localises to the nucleus. In terms of biological role, the proteasome is a multicatalytic proteinase complex which is characterized by its ability to cleave peptides with Arg, Phe, Tyr, Leu, and Glu adjacent to the leaving group at neutral or slightly basic pH. The proteasome has an ATP-dependent proteolytic activity. The polypeptide is Proteasome subunit alpha type-7-B (psma7-b) (Xenopus laevis (African clawed frog)).